The sequence spans 872 residues: Alanine--tRNA ligase (872 aa).

Histidine 567, histidine 571, cysteine 669, and histidine 673 together coordinate Zn(2+).

It belongs to the class-II aminoacyl-tRNA synthetase family. Zn(2+) is required as a cofactor.

It localises to the cytoplasm. It carries out the reaction tRNA(Ala) + L-alanine + ATP = L-alanyl-tRNA(Ala) + AMP + diphosphate. Its function is as follows. Catalyzes the attachment of alanine to tRNA(Ala) in a two-step reaction: alanine is first activated by ATP to form Ala-AMP and then transferred to the acceptor end of tRNA(Ala). Also edits incorrectly charged Ser-tRNA(Ala) and Gly-tRNA(Ala) via its editing domain. The polypeptide is Alanine--tRNA ligase (Streptococcus pneumoniae (strain CGSP14)).